The chain runs to 498 residues: Elastase (498 aa).

Positions 1-23 (MKKVSTLDLLFVAIMGVSPAAFA) are cleaved as a signal peptide. The propeptide occupies 24–197 (ADLIDVSKLP…VLDQWEGLAH (174 aa)). C227 and C255 are disulfide-bonded. Residue D333 coordinates Ca(2+). H337 serves as a coordination point for Zn(2+). Residue E338 is part of the active site. Zn(2+)-binding residues include H341 and E361. Residues E369, E372, D380, and L382 each coordinate Ca(2+). H420 acts as the Proton donor in catalysis. C467 and C494 are oxidised to a cystine.

The protein belongs to the peptidase M4 family. As to quaternary structure, monomer. Ca(2+) is required as a cofactor. It depends on Zn(2+) as a cofactor. In terms of processing, made as a membrane-associated pre-pro-protein, which is exported to the periplasm (yielding pro-elastase) with removal of the signal peptide. Under certain conditions pro-elastase can accumulate. The pro-peptide is removed in the periplasm yielding a (mature length) 33 kDa protein, probably by autocatalysis. The pro-peptide probably remains associated with elastase and can be secreted. Further alterations (perhaps processing) seems to be required before secretion into the extracellular space.

It is found in the secreted. The enzyme catalyses Hydrolysis of proteins including elastin, collagen types III and IV, fibronectin and immunoglobulin A, generally with bulky hydrophobic group at P1'. Insulin B chain cleavage pattern identical to that of thermolysin, but specificity differs in other respects.. Its activity is regulated as follows. Inhibited by phosphoramidon. Functionally, cleaves host elastin, collagen, IgG, and several complement components as well as endogenous pro-aminopeptidase. Autocatalyses processing of its pro-peptide. Processes the pro-peptide of pro-chitin-binding protein (cbpD). Involved in the pathogenesis of P.aeruginosa infections. This chain is Elastase (lasB), found in Pseudomonas aeruginosa (strain ATCC 15692 / DSM 22644 / CIP 104116 / JCM 14847 / LMG 12228 / 1C / PRS 101 / PAO1).